Here is a 490-residue protein sequence, read N- to C-terminus: MEEEGVKEAGEKPRGAQMVDKAGWIKKSSGGLLGFWKDRYLLLCQAQLLVYENEDDQKCVETVELGSYEKCQDLRALLKRKHRFILLRSPGNKVSDIKFQAPTGEEKESWIKALNEGINRGKNKAFDEVKVDKSCALEHVTRDRVRGGQRRRPPTRVHLKEVASAASDGLLRLDLDVPDSGPPVFAPSNHVSEAQPRETPRPLMPPTKPFLAPETTSPGDRVETPVGERAPTPVSASSEVSPESQEDSETPAEEDSGSEQPPNSVLPDKLKVSWENPSPQEAPAAESAEPSQAPCSETSEAAPREGGKPPTPPPKILSEKLKASMGEMQASGPPAPGTVQVSVNGMDDSPEPAKPSQAEGTPGTPPKDATTSTALPPWDLPPQFHPRCSSLGDLLGEGPRHPLQPRERLYRAQLEVKVASEQTEKLLNKVLGSEPAPVSAETLLSQAVEQLRQATQVLQEMRDLGELSQEAPGLREKRKELVTLYRRSAP.

The PH domain occupies 18 to 119 (MVDKAGWIKK…WIKALNEGIN (102 aa)). S164 and S167 each carry phosphoserine. A disordered region spans residues 173-402 (LDLDVPDSGP…DLLGEGPRHP (230 aa)). Low complexity predominate over residues 230 to 243 (APTPVSASSEVSPE). T232 carries the post-translational modification Phosphothreonine. S235, S237, and S238 each carry phosphoserine. The segment covering 244 to 257 (SQEDSETPAEEDSG) has biased composition (acidic residues). At S273 the chain carries Phosphoserine. Over residues 277–297 (PSPQEAPAAESAEPSQAPCSE) the composition is skewed to low complexity. Phosphothreonine is present on residues T298 and T311. 2 positions are modified to phosphoserine: S390 and S468. A coiled-coil region spans residues 439-481 (SAETLLSQAVEQLRQATQVLQEMRDLGELSQEAPGLREKRKEL).

This Homo sapiens (Human) protein is Pleckstrin homology domain-containing family O member 2 (PLEKHO2).